A 452-amino-acid polypeptide reads, in one-letter code: Phosphoglucosamine mutase (452 aa).

Residue S105 is the Phosphoserine intermediate of the active site. Residues S105, D244, D246, and D248 each contribute to the Mg(2+) site. S105 carries the post-translational modification Phosphoserine.

The protein belongs to the phosphohexose mutase family. Mg(2+) is required as a cofactor. Post-translationally, activated by phosphorylation.

The enzyme catalyses alpha-D-glucosamine 1-phosphate = D-glucosamine 6-phosphate. Catalyzes the conversion of glucosamine-6-phosphate to glucosamine-1-phosphate. The protein is Phosphoglucosamine mutase of Blochmanniella floridana.